A 516-amino-acid polypeptide reads, in one-letter code: Gamma-aminobutyrate transaminase 1, mitochondrial (516 aa).

The transit peptide at M1 to F47 directs the protein to the mitochondrion. The span at R45 to E60 shows a compositional bias: polar residues. Residues R45 to K64 are disordered. G171–S172 lines the pyridoxal 5'-phosphate pocket. Y204 lines the substrate pocket. Residue D311 coordinates pyridoxal 5'-phosphate. A substrate-binding site is contributed by K340. K340 is modified (N6-(pyridoxal phosphate)lysine).

This sequence belongs to the class-III pyridoxal-phosphate-dependent aminotransferase family.

It localises to the mitochondrion. The enzyme catalyses 4-aminobutanoate + pyruvate = succinate semialdehyde + L-alanine. It carries out the reaction 4-aminobutanoate + glyoxylate = succinate semialdehyde + glycine. Functionally, transaminase that degrades gamma-amino butyric acid (GABA) and uses pyruvate as amino-group acceptor, but not 2-oxoglutarate. This Oryza sativa subsp. indica (Rice) protein is Gamma-aminobutyrate transaminase 1, mitochondrial.